The primary structure comprises 272 residues: Cell shape-determining protein MreC (272 aa).

Topologically, residues 1 to 8 are cytoplasmic; that stretch reads MNRFKKSK. Residues 9-29 form a helical membrane-spanning segment; sequence YVIIVFVTVLLVSALLATTYS. The Extracellular portion of the chain corresponds to 30–272; the sequence is STIVTKLGDG…VDVIELVGNS (243 aa). Residues 64–112 adopt a coiled-coil conformation; sequence LTRTYNENESLKKQLYQLEVKSNEVESLKTENEQLRQLLDMKSKLQATK.

The protein belongs to the MreC family. As to quaternary structure, homodimer. Interacts with a number of proteins in the elongasome, including PBP1a (pbpA), PBP1b, PBP2a, PBP2b (penA), StkP, MltG, MreD and RodZ.

The protein localises to the cell membrane. Its function is as follows. Involved in formation and maintenance of cell shape, probably part of the elongasome which synthesizes peripheral peptidoglycan (PG). This is Cell shape-determining protein MreC from Streptococcus pneumoniae (strain ATCC BAA-255 / R6).